The primary structure comprises 398 residues: 4-hydroxy-3-methylbut-2-en-1-yl diphosphate synthase (ferredoxin) (398 aa).

The [4Fe-4S] cluster site is built by C306, C309, C340, and E347.

Belongs to the IspG family. [4Fe-4S] cluster is required as a cofactor.

The catalysed reaction is (2E)-4-hydroxy-3-methylbut-2-enyl diphosphate + 2 oxidized [2Fe-2S]-[ferredoxin] + H2O = 2-C-methyl-D-erythritol 2,4-cyclic diphosphate + 2 reduced [2Fe-2S]-[ferredoxin] + H(+). Its pathway is isoprenoid biosynthesis; isopentenyl diphosphate biosynthesis via DXP pathway; isopentenyl diphosphate from 1-deoxy-D-xylulose 5-phosphate: step 5/6. Functionally, converts 2C-methyl-D-erythritol 2,4-cyclodiphosphate (ME-2,4cPP) into 1-hydroxy-2-methyl-2-(E)-butenyl 4-diphosphate. In Synechococcus sp. (strain CC9605), this protein is 4-hydroxy-3-methylbut-2-en-1-yl diphosphate synthase (ferredoxin).